The sequence spans 150 residues: SsrA-binding protein (150 aa).

The protein belongs to the SmpB family.

Its subcellular location is the cytoplasm. Required for rescue of stalled ribosomes mediated by trans-translation. Binds to transfer-messenger RNA (tmRNA), required for stable association of tmRNA with ribosomes. tmRNA and SmpB together mimic tRNA shape, replacing the anticodon stem-loop with SmpB. tmRNA is encoded by the ssrA gene; the 2 termini fold to resemble tRNA(Ala) and it encodes a 'tag peptide', a short internal open reading frame. During trans-translation Ala-aminoacylated tmRNA acts like a tRNA, entering the A-site of stalled ribosomes, displacing the stalled mRNA. The ribosome then switches to translate the ORF on the tmRNA; the nascent peptide is terminated with the 'tag peptide' encoded by the tmRNA and targeted for degradation. The ribosome is freed to recommence translation, which seems to be the essential function of trans-translation. The protein is SsrA-binding protein of Borrelia garinii subsp. bavariensis (strain ATCC BAA-2496 / DSM 23469 / PBi) (Borreliella bavariensis).